Reading from the N-terminus, the 568-residue chain is UPF0313 protein FN0734 (568 aa).

In terms of domain architecture, Radical SAM core spans 289 to 562 (ALDTIKYSVT…KQKQKDIVTE (274 aa)). Positions 303, 307, and 310 each coordinate [4Fe-4S] cluster. The interval 546–568 (VEKDNGKKQKQKDIVTEKRKNRK) is disordered.

Belongs to the UPF0313 family. Requires [4Fe-4S] cluster as cofactor.

This is UPF0313 protein FN0734 from Fusobacterium nucleatum subsp. nucleatum (strain ATCC 25586 / DSM 15643 / BCRC 10681 / CIP 101130 / JCM 8532 / KCTC 2640 / LMG 13131 / VPI 4355).